The chain runs to 203 residues: MGNCFVKKISSDIFNSNYQMLYSELSEQEDLLDFLETKYTDFGILKTDILNYERDSETFKTLLQVLPIYKKTKLRYNLIERCLNNCPPHVKDALIIEIMKAKKILETLDVVFMKIMIGEFTICSDNVNQLLNKFSIDQTTLCDMEKINTLIDLDEENSKRLLTEIDPLLHQETGLYQALPNAVTDPPSEQRAATKKCYEGFTK.

Cysteine 4 is lipidated: S-palmitoyl cysteine; by host.

It belongs to the herpesviridae UL51 family. Oligomerizes. Interacts with U75; this interaction mediates U75 incorporation to virions. Post-translationally, phosphorylated. In terms of processing, palmitoylation is necessary for Golgi localization.

The protein localises to the virion tegument. It localises to the host cytoplasm. Its subcellular location is the host Golgi apparatus. Functionally, plays several roles during the time course of infection, including egress of virus particles from the perinuclear space and secondary envelopment of cytoplasmic capsids that bud into specific trans-Golgi network (TGN)-derived membranes. This is Tegument protein UL51 homolog (U44) from Homo sapiens (Human).